A 319-amino-acid chain; its full sequence is Methionyl-tRNA formyltransferase (319 aa).

Residue 113–116 (SLLP) participates in (6S)-5,6,7,8-tetrahydrofolate binding.

This sequence belongs to the Fmt family.

The enzyme catalyses L-methionyl-tRNA(fMet) + (6R)-10-formyltetrahydrofolate = N-formyl-L-methionyl-tRNA(fMet) + (6S)-5,6,7,8-tetrahydrofolate + H(+). In terms of biological role, attaches a formyl group to the free amino group of methionyl-tRNA(fMet). The formyl group appears to play a dual role in the initiator identity of N-formylmethionyl-tRNA by promoting its recognition by IF2 and preventing the misappropriation of this tRNA by the elongation apparatus. This Pseudomonas fluorescens (strain Pf0-1) protein is Methionyl-tRNA formyltransferase.